A 354-amino-acid polypeptide reads, in one-letter code: MAGMSTHTRRRLTDAPFLAAATGATPSRRPVWFMRQAGRSLPEYRELRAGIGMLESCFDPELVCEITMQPIRRHGVDAAILFSDIVVPLKAAGIDLDIVAGVGPVVAAPVRSVADVRALPRLRPEEVGAVVEGVRLLVDALGQTPLIGFAGAPFTLASYLVEGGPSKHHERTKAMMYADPKTWHELLGVLTDITIAFLRAQLDAGVDAVQLFDSWAGALSPADYRAFVLPHSERVFTEIADAGVPRIHFGVGTGELLGAMGEAGADVVGVDWRVSLTEAARRVGPGKALQGNLDPAVLFAGPRAVEAHARRIAEEADRALALGAAGHIFNLGHGVLPDTDPGVLTALVELVHEL.

Substrate contacts are provided by residues 35-39 (RQAGR), D84, Y159, S214, and H333.

Belongs to the uroporphyrinogen decarboxylase family. Homodimer.

It is found in the cytoplasm. It carries out the reaction uroporphyrinogen III + 4 H(+) = coproporphyrinogen III + 4 CO2. It participates in porphyrin-containing compound metabolism; protoporphyrin-IX biosynthesis; coproporphyrinogen-III from 5-aminolevulinate: step 4/4. In terms of biological role, catalyzes the decarboxylation of four acetate groups of uroporphyrinogen-III to yield coproporphyrinogen-III. The chain is Uroporphyrinogen decarboxylase from Nocardia farcinica (strain IFM 10152).